Reading from the N-terminus, the 701-residue chain is Nucleolar transcription factor 1-B (701 aa).

The interval 1–21 (MNGAAGGDTQGKMTAPKDQDQ) is disordered. 5 DNA-binding regions (HMG box) span residues 112-180 (PKKP…AKFR), 196-264 (PEKP…REYM), 298-362 (TKPP…MRFL), 422-489 (PETP…SDMR), and 508-574 (KKAP…DTWM). A disordered region spans residues 382-426 (MKRKRTNTPASKMATEDAAKVKSRSGQADKKKAAEERAKLPETPK). Positions 408-426 (QADKKKAAEERAKLPETPK) are enriched in basic and acidic residues. A disordered region spans residues 584–701 (AYKEQNTNKR…SADSSDSDSN (118 aa)). Polar residues predominate over residues 597–612 (TKIQAPSSKSKLVIQS). Residues 615–682 (DDDEDDEDDE…DNEEDDDDNE (68 aa)) are compositionally biased toward acidic residues. Residues 683–695 (SGSSSSSSSSADS) show a composition bias toward low complexity.

As to quaternary structure, XUBF consists of 2 polypeptides of 82 and 85 kDa, encoded by the same or closely related genes.

It is found in the nucleus. In terms of biological role, UBF recognizes the ribosomal RNA gene promotor and activates transcription mediated by RNA polymerase I through cooperative interactions with the species-specific factor SL1. It binds specifically to the upstream control element. This chain is Nucleolar transcription factor 1-B (ubtf-b), found in Xenopus laevis (African clawed frog).